A 170-amino-acid chain; its full sequence is Glycine cleavage system H protein, mitochondrial (170 aa).

The transit peptide at 1-47 (MLRTTRLWTTRMPTVSKLFLRNSSGNALNKNKLPFLYSSQGPQAVRY) directs the protein to the mitochondrion. A Lipoyl-binding domain is found at 61 to 143 (TAFVGITKYA…MGDGWLVKMK (83 aa)). Position 102 is an N6-lipoyllysine (lysine 102).

The protein belongs to the GcvH family. In terms of assembly, component of the glycine decarboxylase complex (GDC), which is composed of four proteins: P, T, L and H. It depends on (R)-lipoate as a cofactor.

The protein resides in the mitochondrion. Functionally, the glycine cleavage system (glycine decarboxylase complex) catalyzes the degradation of glycine. The H protein shuttles the methylamine group of glycine from the P protein to the T protein. This Saccharomyces cerevisiae (strain ATCC 204508 / S288c) (Baker's yeast) protein is Glycine cleavage system H protein, mitochondrial (GCV3).